Reading from the N-terminus, the 64-residue chain is Alternative prion protein (64 aa).

The interval 1–22 (MEHWGEPIPGTGQSWRQPLSTS) is disordered. The segment covering 11–22 (TGQSWRQPLSTS) has biased composition (polar residues). A helical transmembrane segment spans residues 40-58 (WRWLGSAPWWWLGTATWWW).

The protein localises to the mitochondrion outer membrane. The sequence is that of Alternative prion protein from Ovis aries (Sheep).